A 927-amino-acid polypeptide reads, in one-letter code: Bifunctional glutamine synthetase adenylyltransferase/adenylyl-removing enzyme (927 aa).

The segment at 1–428 is adenylyl removase; the sequence is MTMTDASDLL…AQFDQVFADK (428 aa). Residues 438-927 are adenylyl transferase; that stretch reads DQAAGCIWSG…AALWARVFGA (490 aa).

Belongs to the GlnE family. It depends on Mg(2+) as a cofactor.

It catalyses the reaction [glutamine synthetase]-O(4)-(5'-adenylyl)-L-tyrosine + phosphate = [glutamine synthetase]-L-tyrosine + ADP. The enzyme catalyses [glutamine synthetase]-L-tyrosine + ATP = [glutamine synthetase]-O(4)-(5'-adenylyl)-L-tyrosine + diphosphate. Involved in the regulation of glutamine synthetase GlnA, a key enzyme in the process to assimilate ammonia. When cellular nitrogen levels are high, the C-terminal adenylyl transferase (AT) inactivates GlnA by covalent transfer of an adenylyl group from ATP to specific tyrosine residue of GlnA, thus reducing its activity. Conversely, when nitrogen levels are low, the N-terminal adenylyl removase (AR) activates GlnA by removing the adenylyl group by phosphorolysis, increasing its activity. The regulatory region of GlnE binds the signal transduction protein PII (GlnB) which indicates the nitrogen status of the cell. The protein is Bifunctional glutamine synthetase adenylyltransferase/adenylyl-removing enzyme of Burkholderia pseudomallei (strain K96243).